We begin with the raw amino-acid sequence, 129 residues long: Small ribosomal subunit protein uS11 (129 aa).

The protein belongs to the universal ribosomal protein uS11 family. As to quaternary structure, part of the 30S ribosomal subunit. Interacts with proteins S7 and S18. Binds to IF-3.

In terms of biological role, located on the platform of the 30S subunit, it bridges several disparate RNA helices of the 16S rRNA. Forms part of the Shine-Dalgarno cleft in the 70S ribosome. This Azotobacter vinelandii (strain DJ / ATCC BAA-1303) protein is Small ribosomal subunit protein uS11.